The chain runs to 149 residues: F420H(2)-dependent quinone reductase MT1299 (149 aa).

Residues 48-50 (AKT), 54-59 (RTTSLT), 70-73 (VASK), 81-85 (GWYHN), and Tyr-130 contribute to the coenzyme F420-(gamma-Glu)n site.

The protein belongs to the F420H(2)-dependent quinone reductase family.

The protein resides in the cell membrane. It carries out the reaction oxidized coenzyme F420-(gamma-L-Glu)(n) + a quinol + H(+) = reduced coenzyme F420-(gamma-L-Glu)(n) + a quinone. In terms of biological role, involved in a F420-dependent anti-oxidant mechanism that protects M.tuberculosis against oxidative stress and bactericidal agents. Catalyzes the F420H(2)-dependent two-electron reduction of quinones to dihydroquinones, thereby preventing the formation of cytotoxic semiquinones obtained by the one-electron reduction pathway. In vitro, catalyzes the reduction of menadione to menadiol; since menaquinone is the sole quinone electron carrier in the respiratory chain in M.tuberculosis, the physiological electron acceptor for Fqr-mediated F420H(2) oxidation is therefore likely to be the endogenous menaquinone found in the membrane fraction of M.tuberculosis. The sequence is that of F420H(2)-dependent quinone reductase MT1299 from Mycobacterium tuberculosis (strain CDC 1551 / Oshkosh).